A 25-amino-acid chain; its full sequence is Small ribosomal subunit protein eS32 (25 aa).

A disordered region spans residues 1 to 25 (MRAKWRKKRVRRLKRKRRKTRARSK).

It belongs to the eukaryotic ribosomal protein eS32 family. As to quaternary structure, component of the small ribosomal subunit.

The polypeptide is Small ribosomal subunit protein eS32 (RPL41) (Quercus suber (Cork oak)).